The chain runs to 1521 residues: Suppressor of Ty 6 homolog (1521 aa).

The interval 1–238 (MDFIDNQAEE…EEIIEDDGEG (238 aa)) is disordered. Basic residues predominate over residues 26–41 (KKMKMAKEKSKRKKKM). Residues 26–42 (KKMKMAKEKSKRKKKMV) carry the Nuclear localization signal motif. Acidic residues-rich tracts occupy residues 45–56 (SDEDEDDDDDEE) and 67–76 (ADDDDEEEDA). The segment covering 77-89 (KSEKSEKSRHSGE) has biased composition (basic and acidic residues). Positions 90–99 (DELDDEDLDL) are enriched in acidic residues. Residues 126-157 (PIRRPNHEDDDLLSERGSDDGDRRKDRGRGDR) show a composition bias toward basic and acidic residues. 3 stretches are compositionally biased toward acidic residues: residues 166–176 (RSEDDFIEDDG), 191–200 (NLPEGAEDDA), and 209–238 (FNLD…DGEG). The S1 motif domain maps to 1183–1252 (LGDSRQGGCP…ERFSLFLSCK (70 aa)). Positions 1300–1389 (HPNFHNVSYE…IARFVQPMIQ (90 aa)) constitute an SH2 domain.

Belongs to the SPT6 family. In terms of assembly, interacts with glp-1 and lin-12. In terms of tissue distribution, abundant in embryos, and less abundant in larvae.

It localises to the nucleus. Functionally, histone H3-H4 chaperone that plays a role in maintenance of chromatin structure during RNA polymerase II transcription elongation. Required for several aspects of morphogenesis of C.elegans, including regulation of division in the germline and gut and specification of ventral-uterine precursor cell fate. The polypeptide is Suppressor of Ty 6 homolog (emb-5) (Caenorhabditis elegans).